An 885-amino-acid polypeptide reads, in one-letter code: Rho GTPase-activating protein gacFF (885 aa).

A compositionally biased stretch (low complexity) spans 168-182; sequence TTTNNSNNSNSNNNN. The interval 168 to 187 is disordered; the sequence is TTTNNSNNSNSNNNNKQYNS. A coiled-coil region spans residues 222–249; the sequence is LINKIQNDSEQLKLVLSQVEQQIEFLKS. The region spanning 348 to 394 is the F-box domain; sequence SDIFSLLPTHLTLYVFSYLEPKELLILAQVSSQWQKLAGDNLLWVRF. The PH domain occupies 464–571; the sequence is SSSKEGWLYK…WMILLNSIIK (108 aa). Composition is skewed to low complexity over residues 594–622 and 629–648; these read NNVY…NNNN and LPPL…SSTG. The disordered stretch occupies residues 594–680; that stretch reads NNVYINNNNN…GGGSGGNNNF (87 aa). Residues 701–885 enclose the Rho-GAP domain; it reads VALSKILENQ…KYYDEIFIKK (185 aa).

Its subcellular location is the cytoplasm. Rho GTPase-activating protein involved in the signal transduction pathway. This chain is Rho GTPase-activating protein gacFF (gacFF), found in Dictyostelium discoideum (Social amoeba).